Consider the following 469-residue polypeptide: Glutamate--tRNA ligase (469 aa).

The 'HIGH' region motif lies at 9–19; it reads PSPTGFLHVGG. Zn(2+) is bound by residues Cys-98, Cys-100, Cys-125, and Asp-127. Residues 236–240 carry the 'KMSKS' region motif; the sequence is KLSKR. Residue Lys-239 participates in ATP binding.

It belongs to the class-I aminoacyl-tRNA synthetase family. Glutamate--tRNA ligase type 1 subfamily. As to quaternary structure, monomer. Zn(2+) serves as cofactor.

The protein localises to the cytoplasm. The catalysed reaction is tRNA(Glu) + L-glutamate + ATP = L-glutamyl-tRNA(Glu) + AMP + diphosphate. In terms of biological role, catalyzes the attachment of glutamate to tRNA(Glu) in a two-step reaction: glutamate is first activated by ATP to form Glu-AMP and then transferred to the acceptor end of tRNA(Glu). The sequence is that of Glutamate--tRNA ligase from Shewanella sediminis (strain HAW-EB3).